The primary structure comprises 480 residues: Proline--tRNA ligase (480 aa).

The protein belongs to the class-II aminoacyl-tRNA synthetase family. ProS type 3 subfamily. In terms of assembly, homodimer.

It localises to the cytoplasm. The enzyme catalyses tRNA(Pro) + L-proline + ATP = L-prolyl-tRNA(Pro) + AMP + diphosphate. Catalyzes the attachment of proline to tRNA(Pro) in a two-step reaction: proline is first activated by ATP to form Pro-AMP and then transferred to the acceptor end of tRNA(Pro). The sequence is that of Proline--tRNA ligase from Pyrococcus horikoshii (strain ATCC 700860 / DSM 12428 / JCM 9974 / NBRC 100139 / OT-3).